A 214-amino-acid chain; its full sequence is MGRGPRYRVPLRRRREGKTNYYRRFRLVKSGKPRMAVRISNEYLWVQFLEARIEGDRVIAAAHSRELIKKFGWKGDGNNTCAAYLTGYLAGLRALEKGVREAVLDVGLHKPVKGSRVFAALKGALDAGVEIPHSEEILPGDERVRCEHIAQWAEALKEENAELYQRQFSRYLDRGLNPEELPGHVEEVKKAIEEAYKHVAEETAAEGEEVEVKA.

This sequence belongs to the universal ribosomal protein uL18 family. In terms of assembly, part of the 50S ribosomal subunit. Contacts the 5S and 23S rRNAs.

Functionally, this is one of the proteins that bind and probably mediate the attachment of the 5S RNA into the large ribosomal subunit, where it forms part of the central protuberance. This chain is Large ribosomal subunit protein uL18, found in Aeropyrum pernix (strain ATCC 700893 / DSM 11879 / JCM 9820 / NBRC 100138 / K1).